We begin with the raw amino-acid sequence, 346 residues long: Pyrophosphate--fructose 6-phosphate 1-phosphotransferase (346 aa).

G13 lines the diphosphate pocket. E105 is a Mg(2+) binding site. Residues T127–D129, R164, M171–R173, E224, R269, and H275–R278 each bind substrate. The Proton acceptor role is filled by D129.

It belongs to the phosphofructokinase type A (PFKA) family. Mixed-substrate PFK group III subfamily. In terms of assembly, homodimer. Mg(2+) serves as cofactor.

Its subcellular location is the cytoplasm. The catalysed reaction is beta-D-fructose 6-phosphate + diphosphate = beta-D-fructose 1,6-bisphosphate + phosphate + H(+). The protein operates within carbohydrate degradation; glycolysis; D-glyceraldehyde 3-phosphate and glycerone phosphate from D-glucose: step 3/4. Its activity is regulated as follows. Non-allosteric. In terms of biological role, catalyzes the phosphorylation of D-fructose 6-phosphate, the first committing step of glycolysis. Uses inorganic phosphate (PPi) as phosphoryl donor instead of ATP like common ATP-dependent phosphofructokinases (ATP-PFKs), which renders the reaction reversible, and can thus function both in glycolysis and gluconeogenesis. Consistently, PPi-PFK can replace the enzymes of both the forward (ATP-PFK) and reverse (fructose-bisphosphatase (FBPase)) reactions. The polypeptide is Pyrophosphate--fructose 6-phosphate 1-phosphotransferase (Dictyoglomus thermophilum).